A 239-amino-acid polypeptide reads, in one-letter code: Probable 2-phosphosulfolactate phosphatase (239 aa).

It belongs to the ComB family. Mg(2+) is required as a cofactor.

It catalyses the reaction (2R)-O-phospho-3-sulfolactate + H2O = (2R)-3-sulfolactate + phosphate. The protein is Probable 2-phosphosulfolactate phosphatase of Clostridium botulinum (strain Kyoto / Type A2).